Here is a 132-residue protein sequence, read N- to C-terminus: Large ribosomal subunit protein uL14 (132 aa).

Belongs to the universal ribosomal protein uL14 family. Part of the 50S ribosomal subunit. Forms a cluster with proteins L3 and L24e, part of which may contact the 16S rRNA in 2 intersubunit bridges.

Its function is as follows. Binds to 23S rRNA. Forms part of two intersubunit bridges in the 70S ribosome. The polypeptide is Large ribosomal subunit protein uL14 (Methanococcus vannielii).